The following is a 107-amino-acid chain: Glutaredoxin 4 (107 aa).

The 103-residue stretch at 4–106 (LDKIKKQISE…TLLAEVAAKH (103 aa)) folds into the Glutaredoxin domain. Lysine 21 is a binding site for glutathione. Cysteine 29 provides a ligand contact to [2Fe-2S] cluster. Glutathione contacts are provided by residues arginine 58, phenylalanine 70, and 83-84 (CD).

It belongs to the glutaredoxin family. Monothiol subfamily. Homodimer.

Its subcellular location is the cytoplasm. Its function is as follows. Monothiol glutaredoxin involved in the biogenesis of iron-sulfur clusters. The chain is Glutaredoxin 4 (grxD) from Haemophilus influenzae (strain 86-028NP).